Consider the following 885-residue polypeptide: Alanine--tRNA ligase (885 aa).

Residues H574, H578, C685, and H689 each coordinate Zn(2+).

The protein belongs to the class-II aminoacyl-tRNA synthetase family. The cofactor is Zn(2+).

It localises to the cytoplasm. It carries out the reaction tRNA(Ala) + L-alanine + ATP = L-alanyl-tRNA(Ala) + AMP + diphosphate. Catalyzes the attachment of alanine to tRNA(Ala) in a two-step reaction: alanine is first activated by ATP to form Ala-AMP and then transferred to the acceptor end of tRNA(Ala). Also edits incorrectly charged Ser-tRNA(Ala) and Gly-tRNA(Ala) via its editing domain. This chain is Alanine--tRNA ligase, found in Deinococcus geothermalis (strain DSM 11300 / CIP 105573 / AG-3a).